The sequence spans 391 residues: 3-ketoacyl-CoA thiolase (391 aa).

Cys-95 functions as the Acyl-thioester intermediate in the catalytic mechanism. Active-site proton acceptor residues include His-347 and Cys-377.

The protein belongs to the thiolase-like superfamily. Thiolase family. As to quaternary structure, heterotetramer of two alpha chains (FadB) and two beta chains (FadA).

The protein resides in the cytoplasm. The catalysed reaction is an acyl-CoA + acetyl-CoA = a 3-oxoacyl-CoA + CoA. It functions in the pathway lipid metabolism; fatty acid beta-oxidation. Its function is as follows. Catalyzes the final step of fatty acid oxidation in which acetyl-CoA is released and the CoA ester of a fatty acid two carbons shorter is formed. In Pseudomonas putida (strain ATCC 47054 / DSM 6125 / CFBP 8728 / NCIMB 11950 / KT2440), this protein is 3-ketoacyl-CoA thiolase.